Here is a 52-residue protein sequence, read N- to C-terminus: ATP synthase F(0) complex subunit 8 (52 aa).

The chain crosses the membrane as a helical span at residues 10-30; it reads LMTHLWAWLMLYLTTQKIKTF.

Belongs to the ATPase protein 8 family. In terms of assembly, component of the ATP synthase complex composed at least of ATP5F1A/subunit alpha, ATP5F1B/subunit beta, ATP5MC1/subunit c (homooctomer), MT-ATP6/subunit a, MT-ATP8/subunit 8, ATP5ME/subunit e, ATP5MF/subunit f, ATP5MG/subunit g, ATP5MK/subunit k, ATP5MJ/subunit j, ATP5F1C/subunit gamma, ATP5F1D/subunit delta, ATP5F1E/subunit epsilon, ATP5PF/subunit F6, ATP5PB/subunit b, ATP5PD/subunit d, ATP5PO/subunit OSCP. ATP synthase complex consists of a soluble F(1) head domain (subunits alpha(3) and beta(3)) - the catalytic core - and a membrane F(0) domain - the membrane proton channel (subunits c, a, 8, e, f, g, k and j). These two domains are linked by a central stalk (subunits gamma, delta, and epsilon) rotating inside the F1 region and a stationary peripheral stalk (subunits F6, b, d, and OSCP).

It localises to the mitochondrion membrane. Functionally, subunit 8, of the mitochondrial membrane ATP synthase complex (F(1)F(0) ATP synthase or Complex V) that produces ATP from ADP in the presence of a proton gradient across the membrane which is generated by electron transport complexes of the respiratory chain. ATP synthase complex consist of a soluble F(1) head domain - the catalytic core - and a membrane F(1) domain - the membrane proton channel. These two domains are linked by a central stalk rotating inside the F(1) region and a stationary peripheral stalk. During catalysis, ATP synthesis in the catalytic domain of F(1) is coupled via a rotary mechanism of the central stalk subunits to proton translocation. In vivo, can only synthesize ATP although its ATP hydrolase activity can be activated artificially in vitro. Part of the complex F(0) domain. The polypeptide is ATP synthase F(0) complex subunit 8 (Lycodon semicarinatus (Ryukyu odd-tooth snake)).